The following is a 1013-amino-acid chain: Hemoglobin-binding protein A (1013 aa).

The signal sequence occupies residues 1 to 24 (MTNFKFSLLACSIAFALNASTAYA). 8 tandem repeats follow at residues 26 to 29 (QPTN), 30 to 33 (QPTN), 34 to 37 (QPTN), 38 to 41 (QPTN), 42 to 45 (QPTN), 46 to 49 (QPTN), 50 to 53 (QPTN), and 54 to 57 (QPTN). An 8 X 4 AA tandem repeats of Q-P-T-N region spans residues 26–57 (QPTNQPTNQPTNQPTNQPTNQPTNQPTNQPTN). The segment covering 26 to 58 (QPTNQPTNQPTNQPTNQPTNQPTNQPTNQPTNQ) has biased composition (low complexity). The disordered stretch occupies residues 26 to 61 (QPTNQPTNQPTNQPTNQPTNQPTNQPTNQPTNQDSN). Residues 67–74 (EQINVSGS) carry the TonB box motif. In terms of domain architecture, TBDR plug spans 78–205 (SDSKTPPKIA…LGGSVIYKTK (128 aa)). The 801-residue stretch at 213–1013 (NKDYYVSYKK…NYKMSVQFEF (801 aa)) folds into the TBDR beta-barrel domain. A TonB C-terminal box motif is present at residues 996-1013 (NRFYAPGRNYKMSVQFEF).

This sequence belongs to the TonB-dependent receptor family. Hemoglobin/haptoglobin binding protein subfamily.

It localises to the cell outer membrane. Functionally, acts as a receptor for hemoglobin of the human host and is required for heme uptake. The polypeptide is Hemoglobin-binding protein A (hgbA) (Haemophilus influenzae).